The chain runs to 271 residues: MVGEKLVAYMLVSVLGLALLRSVFGQHMPEEPCSVQILVPGLKGEAGEKGEKGAPGRPGRVGPTGEQGPPGDKGQKGSPGRYGKMGPTGPKGLKGDMGDPGPKGPNGEPGVPCECAPLRKMIGEMDIQVVQLTNELKFIKNAVAGIKETDSKVYLLVKEEKRYREAEVFCQGRGGHLAMPKDAAANRAIAGYVTDAGLSRVYIGINDLEREGHFVYVERSPMTTFSRWREGEPNNAYDDEDCVEMVSSGEWIDVACQLTMYFVCEFDKDTV.

The first 25 residues, 1–25, serve as a signal peptide directing secretion; that stretch reads MVGEKLVAYMLVSVLGLALLRSVFG. In terms of domain architecture, Collagen-like spans 44 to 103; sequence GEAGEKGEKGAPGRPGRVGPTGEQGPPGDKGQKGSPGRYGKMGPTGPKGLKGDMGDPGPK. Residues 46 to 112 are disordered; sequence AGEKGEKGAP…KGPNGEPGVP (67 aa). A coiled-coil region spans residues 124–148; sequence EMDIQVVQLTNELKFIKNAVAGIKE. The region spanning 149-265 is the C-type lectin domain; sequence TDSKVYLLVK…CQLTMYFVCE (117 aa). 2 disulfide bridges follow: cysteine 170–cysteine 264 and cysteine 242–cysteine 256. Position 200 (arginine 200) interacts with a carbohydrate. 8 residues coordinate Ca(2+): aspartate 207, glutamate 211, glutamate 232, asparagine 234, asparagine 235, aspartate 238, glutamate 240, and aspartate 241. Glutamate 240 is a binding site for a carbohydrate. A carbohydrate-binding positions include glutamate 244 and 252–254; that span reads IDV. Aspartate 253 lines the Ca(2+) pocket.

Belongs to the COLEC10/COLEC11 family. As to quaternary structure, homotrimer; disulfide-linked. Interacts with MASP1; probably triggers the lectin pathway of complement.

Its subcellular location is the secreted. In terms of biological role, lectin that plays a role in innate immunity, apoptosis and embryogenesis. Calcium-dependent lectin that binds self and non-self glycoproteins presenting high mannose oligosaccharides with at least one terminal alpha-1,2-linked mannose epitope. Primarily recognizes the terminal disaccharide of the glycan. Also recognizes a subset of fucosylated glycans and lipopolysaccharides. Plays a role in innate immunity through its ability to bind non-self sugars presented by microorganisms and to activate the complement through the recruitment of MAPS1. Also plays a role in apoptosis through its ability to bind in a calcium-independent manner the DNA present at the surface of apoptotic cells and to activate the complement in response to this binding. Finally, plays a role in development, probably serving as a guidance cue during the migration of neural crest cells and other cell types during embryogenesis. This Danio rerio (Zebrafish) protein is Collectin-11 (colec11).